Consider the following 131-residue polypeptide: Large ribosomal subunit protein bL19 (131 aa).

A compositionally biased stretch (basic and acidic residues) spans 111–124 (RIAERAERGSEKGK). The tract at residues 111–131 (RIAERAERGSEKGKTTPAAAE) is disordered.

Belongs to the bacterial ribosomal protein bL19 family.

In terms of biological role, this protein is located at the 30S-50S ribosomal subunit interface and may play a role in the structure and function of the aminoacyl-tRNA binding site. The chain is Large ribosomal subunit protein bL19 from Methylobacterium nodulans (strain LMG 21967 / CNCM I-2342 / ORS 2060).